Consider the following 129-residue polypeptide: Glycine cleavage system H protein (129 aa).

One can recognise a Lipoyl-binding domain in the interval 24–106 (SYTVGISEHA…FGDGWFFRVM (83 aa)). Lys65 bears the N6-lipoyllysine mark.

This sequence belongs to the GcvH family. In terms of assembly, the glycine cleavage system is composed of four proteins: P, T, L and H. It depends on (R)-lipoate as a cofactor.

Functionally, the glycine cleavage system catalyzes the degradation of glycine. The H protein shuttles the methylamine group of glycine from the P protein to the T protein. The protein is Glycine cleavage system H protein of Shewanella halifaxensis (strain HAW-EB4).